The chain runs to 417 residues: Gamma-glutamyl phosphate reductase (417 aa).

It belongs to the gamma-glutamyl phosphate reductase family.

Its subcellular location is the cytoplasm. The catalysed reaction is L-glutamate 5-semialdehyde + phosphate + NADP(+) = L-glutamyl 5-phosphate + NADPH + H(+). It functions in the pathway amino-acid biosynthesis; L-proline biosynthesis; L-glutamate 5-semialdehyde from L-glutamate: step 2/2. Its function is as follows. Catalyzes the NADPH-dependent reduction of L-glutamate 5-phosphate into L-glutamate 5-semialdehyde and phosphate. The product spontaneously undergoes cyclization to form 1-pyrroline-5-carboxylate. The sequence is that of Gamma-glutamyl phosphate reductase from Legionella pneumophila (strain Lens).